The chain runs to 139 residues: Protein archease (139 aa).

Residues Asp12, Asp138, and Ile139 each coordinate Ca(2+).

Belongs to the archease family.

Activates the tRNA-splicing ligase complex by facilitating the enzymatic turnover of catalytic subunit RtcB. Acts by promoting the guanylylation of RtcB, a key intermediate step in tRNA ligation. Can also alter the NTP specificity of RtcB such that ATP, dGTP or ITP is used efficiently. The sequence is that of Protein archease from Sulfolobus acidocaldarius (strain ATCC 33909 / DSM 639 / JCM 8929 / NBRC 15157 / NCIMB 11770).